We begin with the raw amino-acid sequence, 118 residues long: Large ribosomal subunit protein uL18 (118 aa).

Belongs to the universal ribosomal protein uL18 family. In terms of assembly, part of the 50S ribosomal subunit; part of the 5S rRNA/L5/L18/L25 subcomplex. Contacts the 5S and 23S rRNAs.

In terms of biological role, this is one of the proteins that bind and probably mediate the attachment of the 5S RNA into the large ribosomal subunit, where it forms part of the central protuberance. This chain is Large ribosomal subunit protein uL18, found in Sulfurimonas denitrificans (strain ATCC 33889 / DSM 1251) (Thiomicrospira denitrificans (strain ATCC 33889 / DSM 1251)).